Consider the following 333-residue polypeptide: Bifunctional phosphoglucose/phosphomannose isomerase (333 aa).

Positions 22–160 (LEGALEGVEE…SGALGVDLEA (139 aa)) constitute an SIS domain. 6 residues coordinate D-fructose 6-phosphate: Gly-39, Ser-40, Ser-84, Ser-86, Thr-89, and Arg-136. Glu-211 (proton acceptor) is an active-site residue. The D-fructose 6-phosphate site is built by His-227 and Lys-322. Catalysis depends on His-227, which acts as the Proton donor. The Proton acceptor role is filled by Lys-322.

The protein belongs to the PGI/PMI family. Homodimer.

It carries out the reaction alpha-D-glucose 6-phosphate = beta-D-fructose 6-phosphate. The enzyme catalyses D-mannose 6-phosphate = D-fructose 6-phosphate. Inhibited by low concentrations of erythrose 4-phosphate and 6-phosphogluconate. Functionally, dual specificity isomerase that catalyzes the isomerization of both glucose-6-phosphate and mannose-6-phosphate to fructose-6-phosphate with similar catalytic efficiency. This chain is Bifunctional phosphoglucose/phosphomannose isomerase, found in Aeropyrum pernix (strain ATCC 700893 / DSM 11879 / JCM 9820 / NBRC 100138 / K1).